A 186-amino-acid chain; its full sequence is Intraflagellar transport protein 27 homolog (186 aa).

GTP is bound by residues Gly12 to Thr19, Asp64 to Lys68, and Asn123 to Asp126.

It belongs to the small GTPase superfamily. Rab family. Component of the IFT complex B, at least composed of IFT20, IFT25, IFT27, IFT52, IFT57, IFT74, IFT81, IFT88 and TRAF3IP1. Interacts with IFT25. Interacts with IFT70B. Interacts with RABL2/RABL2A; binding is equal in the presence of GTP or GDP. Interacts with ARL6; recognizes and binds with the GTP-free form of ARL6.

Its subcellular location is the cell projection. It is found in the cilium. The protein resides in the cytoplasm. It localises to the flagellum. In terms of biological role, small GTPase-like component of the intraflagellar transport (IFT) complex B that promotes the exit of the BBSome complex from cilia via its interaction with ARL6. Not involved in entry of the BBSome complex into cilium. Prevents aggregation of GTP-free ARL6. Required for hedgehog signaling. Forms a subcomplex within the IFT complex B with IFT25. Its role in intraflagellar transport is mainly seen in tissues rich in ciliated cells such as kidney and testis. Essential for male fertility, spermiogenesis and sperm flagella formation. Plays a role in the early development of the kidney. May be involved in the regulation of ureteric bud initiation. This chain is Intraflagellar transport protein 27 homolog (IFT27), found in Homo sapiens (Human).